The following is a 282-amino-acid chain: Shikimate dehydrogenase (NADP(+)) (282 aa).

Shikimate contacts are provided by residues 19–21 and threonine 66; that span reads TQS. The Proton acceptor role is filled by lysine 70. Residues asparagine 91 and aspartate 107 each contribute to the shikimate site. Residues 132 to 136, 155 to 160, isoleucine 224, and glycine 246 contribute to the NADP(+) site; these read GAGGA and NRTITR.

The protein belongs to the shikimate dehydrogenase family. As to quaternary structure, homodimer.

The catalysed reaction is shikimate + NADP(+) = 3-dehydroshikimate + NADPH + H(+). Its pathway is metabolic intermediate biosynthesis; chorismate biosynthesis; chorismate from D-erythrose 4-phosphate and phosphoenolpyruvate: step 4/7. Involved in the biosynthesis of the chorismate, which leads to the biosynthesis of aromatic amino acids. Catalyzes the reversible NADPH linked reduction of 3-dehydroshikimate (DHSA) to yield shikimate (SA). This is Shikimate dehydrogenase (NADP(+)) from Buchnera aphidicola subsp. Baizongia pistaciae (strain Bp).